Reading from the N-terminus, the 133-residue chain is ATP synthase epsilon chain, chloroplastic (133 aa).

Belongs to the ATPase epsilon chain family. As to quaternary structure, F-type ATPases have 2 components, CF(1) - the catalytic core - and CF(0) - the membrane proton channel. CF(1) has five subunits: alpha(3), beta(3), gamma(1), delta(1), epsilon(1). CF(0) has three main subunits: a, b and c.

The protein resides in the plastid. It localises to the chloroplast thylakoid membrane. Its function is as follows. Produces ATP from ADP in the presence of a proton gradient across the membrane. This chain is ATP synthase epsilon chain, chloroplastic, found in Ipomoea batatas (Sweet potato).